Consider the following 203-residue polypeptide: Mitotic spindle checkpoint component mad2 (203 aa).

Residues 13–197 (KGSSKLVSEF…TSMHKIDCQV (185 aa)) form the HORMA domain.

This sequence belongs to the MAD2 family. As to quaternary structure, interacts with mad3 and slp1.

The protein resides in the nucleus. Feedback control that prevents cells with incompletely assembled spindles from leaving mitosis. It interacts with the anaphase promoting complex/cyclosome (APC/C) thereby inhibiting APC/C-dependent proteolysis, a step required for exit from mitosis. The sequence is that of Mitotic spindle checkpoint component mad2 from Schizosaccharomyces pombe (strain 972 / ATCC 24843) (Fission yeast).